The sequence spans 276 residues: NAD-capped RNA hydrolase NudC (276 aa).

Arg82 provides a ligand contact to substrate. 2 residues coordinate Zn(2+): Cys112 and Cys115. Glu125 is a binding site for substrate. The Zn(2+) site is built by Cys130 and Cys133. Residue Tyr138 coordinates substrate. One can recognise a Nudix hydrolase domain in the interval 139–262; it reads PRISPSMIVL…SIARYLIDVY (124 aa). Residues Ala172, Glu188, and Glu192 each contribute to the a divalent metal cation site. Residues 173-194 carry the Nudix box motif; the sequence is GFAEPGESAEDCLIREVREEVQ. 206-213 contributes to the substrate binding site; it reads QCWPFPHS. An a divalent metal cation-binding site is contributed by Glu233. Ala255 provides a ligand contact to substrate.

This sequence belongs to the Nudix hydrolase family. NudC subfamily. Homodimer. Mg(2+) serves as cofactor. Requires Mn(2+) as cofactor. The cofactor is Zn(2+).

The catalysed reaction is a 5'-end NAD(+)-phospho-ribonucleoside in mRNA + H2O = a 5'-end phospho-adenosine-phospho-ribonucleoside in mRNA + beta-nicotinamide D-ribonucleotide + 2 H(+). It carries out the reaction NAD(+) + H2O = beta-nicotinamide D-ribonucleotide + AMP + 2 H(+). It catalyses the reaction NADH + H2O = reduced beta-nicotinamide D-ribonucleotide + AMP + 2 H(+). Functionally, mRNA decapping enzyme that specifically removes the nicotinamide adenine dinucleotide (NAD) cap from a subset of mRNAs by hydrolyzing the diphosphate linkage to produce nicotinamide mononucleotide (NMN) and 5' monophosphate mRNA. The NAD-cap is present at the 5'-end of some mRNAs and stabilizes RNA against 5'-processing. Has preference for mRNAs with a 5'-end purine. Catalyzes the hydrolysis of a broad range of dinucleotide pyrophosphates. In Pseudomonas fluorescens (strain Pf0-1), this protein is NAD-capped RNA hydrolase NudC.